The sequence spans 23 residues: Caerulein precursor fragment R6 (23 aa).

In terms of tissue distribution, expressed by the skin glands.

The protein resides in the secreted. Antimicrobial peptide. In Xenopus ruwenzoriensis (Uganda clawed frog), this protein is Caerulein precursor fragment R6.